We begin with the raw amino-acid sequence, 284 residues long: uncharacterized protein (284 aa).

The signal sequence occupies residues 1–23; it reads MKRGCAIAVMICGLITSVSAASA.

This sequence belongs to the surface antigen msp4 family.

This is an uncharacterized protein from Brucella melitensis biotype 1 (strain ATCC 23456 / CCUG 17765 / NCTC 10094 / 16M).